Here is a 143-residue protein sequence, read N- to C-terminus: Large-conductance mechanosensitive channel (143 aa).

The next 2 membrane-spanning stretches (helical) occupy residues 10 to 30 (FAVK…GAFS) and 89 to 109 (GSFI…FLMV).

This sequence belongs to the MscL family. In terms of assembly, homopentamer.

Its subcellular location is the cell inner membrane. Its function is as follows. Channel that opens in response to stretch forces in the membrane lipid bilayer. May participate in the regulation of osmotic pressure changes within the cell. This Burkholderia vietnamiensis (strain G4 / LMG 22486) (Burkholderia cepacia (strain R1808)) protein is Large-conductance mechanosensitive channel.